The primary structure comprises 277 residues: Urease accessory protein UreD (277 aa).

It belongs to the UreD family. As to quaternary structure, ureD, UreF and UreG form a complex that acts as a GTP-hydrolysis-dependent molecular chaperone, activating the urease apoprotein by helping to assemble the nickel containing metallocenter of UreC. The UreE protein probably delivers the nickel.

The protein localises to the cytoplasm. Its function is as follows. Required for maturation of urease via the functional incorporation of the urease nickel metallocenter. The chain is Urease accessory protein UreD from Flavobacterium johnsoniae (strain ATCC 17061 / DSM 2064 / JCM 8514 / BCRC 14874 / CCUG 350202 / NBRC 14942 / NCIMB 11054 / UW101) (Cytophaga johnsonae).